Reading from the N-terminus, the 238-residue chain is Cysteine-rich venom protein pseudechetoxin-like (238 aa).

The first 19 residues, 1–19 (MIAFIVLLSLAAVLQQSSG), serve as a signal peptide directing secretion. Positions 20 to 28 (TVDFASESS) are excised as a propeptide. The SCP domain maps to 38-164 (VDKHNDLRRS…STKYLYVCQY (127 aa)). 8 disulfides stabilise this stretch: Cys-75-Cys-153, Cys-92-Cys-165, Cys-148-Cys-162, Cys-184-Cys-191, Cys-187-Cys-196, Cys-200-Cys-233, Cys-209-Cys-227, and Cys-218-Cys-231. The ShKT domain maps to 200–233 (CKHNDDLSNCKPLAKKSKCQTEWIKSKCPATCFC).

It belongs to the CRISP family. In terms of tissue distribution, expressed by the venom gland.

It localises to the secreted. Blocks olfactory (CNGA2) and retinal (CNGA1) CNG channel currents. Does not affect neither depolarization- nor caffeine-induced contraction of smooth muscle. The polypeptide is Cysteine-rich venom protein pseudechetoxin-like (Oxyuranus microlepidotus (Inland taipan)).